The primary structure comprises 288 residues: Nucleotide-binding protein Tola_2941 (288 aa).

8–15 (GRSGSGKT) contacts ATP. 56–59 (DVRN) contributes to the GTP binding site.

It belongs to the RapZ-like family.

Functionally, displays ATPase and GTPase activities. This is Nucleotide-binding protein Tola_2941 from Tolumonas auensis (strain DSM 9187 / NBRC 110442 / TA 4).